Consider the following 364-residue polypeptide: UDP-N-acetylglucosamine--N-acetylmuramyl-(pentapeptide) pyrophosphoryl-undecaprenol N-acetylglucosamine transferase (364 aa).

UDP-N-acetyl-alpha-D-glucosamine-binding positions include 15 to 17, Asn-123, Arg-164, Ser-191, and Gln-286; that span reads TGG.

Belongs to the glycosyltransferase 28 family. MurG subfamily.

It localises to the cell inner membrane. It carries out the reaction di-trans,octa-cis-undecaprenyl diphospho-N-acetyl-alpha-D-muramoyl-L-alanyl-D-glutamyl-meso-2,6-diaminopimeloyl-D-alanyl-D-alanine + UDP-N-acetyl-alpha-D-glucosamine = di-trans,octa-cis-undecaprenyl diphospho-[N-acetyl-alpha-D-glucosaminyl-(1-&gt;4)]-N-acetyl-alpha-D-muramoyl-L-alanyl-D-glutamyl-meso-2,6-diaminopimeloyl-D-alanyl-D-alanine + UDP + H(+). It functions in the pathway cell wall biogenesis; peptidoglycan biosynthesis. Cell wall formation. Catalyzes the transfer of a GlcNAc subunit on undecaprenyl-pyrophosphoryl-MurNAc-pentapeptide (lipid intermediate I) to form undecaprenyl-pyrophosphoryl-MurNAc-(pentapeptide)GlcNAc (lipid intermediate II). In Prochlorococcus marinus (strain MIT 9515), this protein is UDP-N-acetylglucosamine--N-acetylmuramyl-(pentapeptide) pyrophosphoryl-undecaprenol N-acetylglucosamine transferase.